The sequence spans 81 residues: Conotoxin Vc6.13 (81 aa).

An N-terminal signal peptide occupies residues 1–19; it reads MEKLTILLLVAAVLMSIQA. The propeptide occupies 20 to 44; sequence LNQEQHQRAKINLLSKRKAPAERWW. Cystine bridges form between cysteine 49–cysteine 63, cysteine 56–cysteine 67, and cysteine 62–cysteine 72.

This sequence belongs to the conotoxin O2 superfamily. In terms of tissue distribution, expressed by the venom duct.

The protein resides in the secreted. In terms of biological role, inhibits voltage-gated ion channels. The sequence is that of Conotoxin Vc6.13 from Conus victoriae (Queen Victoria cone).